A 136-amino-acid polypeptide reads, in one-letter code: Large ribosomal subunit protein uL16 (136 aa).

Belongs to the universal ribosomal protein uL16 family. As to quaternary structure, part of the 50S ribosomal subunit.

Its function is as follows. Binds 23S rRNA and is also seen to make contacts with the A and possibly P site tRNAs. The chain is Large ribosomal subunit protein uL16 from Vesicomyosocius okutanii subsp. Calyptogena okutanii (strain HA).